The following is a 58-amino-acid chain: Large ribosomal subunit protein bL32c (58 aa).

Positions 1–19 (MAVPKKRKSKMKTRLRKAQ) are enriched in basic residues. Residues 1 to 25 (MAVPKKRKSKMKTRLRKAQWKSEAS) are disordered.

It belongs to the bacterial ribosomal protein bL32 family.

It is found in the plastid. It localises to the chloroplast. The polypeptide is Large ribosomal subunit protein bL32c (rpl32) (Chlorella vulgaris (Green alga)).